The primary structure comprises 172 residues: MRASRGFTLIELMVVMVIISVLIGLAVLSTGFASTSRELDSEAERLAGLIGVLTDEAVLDNREYGLRLERDAYQVLRYDEAKARWLPVARDSHRLPEWAELTFELDGQPLVLAGSKGEKEQKKGTDQPQLLILSSGELSPFRLRLAERGPEGRALSLSSDGFRLPRVEVARR.

Residues 1–6 (MRASRG) constitute a propeptide, leader sequence. The residue at position 7 (Phe7) is an N-methylphenylalanine. Residues 7 to 27 (FTLIELMVVMVIISVLIGLAV) form a helical membrane-spanning segment.

The protein belongs to the GSP H family. In terms of assembly, type II secretion is composed of four main components: the outer membrane complex, the inner membrane complex, the cytoplasmic secretion ATPase and the periplasm-spanning pseudopilus. Forms the tip of the type II pseudopilus by interacting with XcpV, XcpW and XcpX. Interacts with core component XcpT. Cleaved by prepilin peptidase. In terms of processing, methylated by prepilin peptidase at the amino group of the N-terminal phenylalanine once the leader sequence is cleaved by prepilin peptidase.

The protein localises to the cell inner membrane. Component of the type II secretion system required for the energy-dependent secretion of extracellular factors such as proteases and toxins from the periplasm. Part of the pseudopilus tip complex that is critical for the recognition and binding of secretion substrates. Type II pseudopilus confers increased bacterial adhesive capabilities. The sequence is that of Type II secretion system protein H (xcpU) from Pseudomonas aeruginosa (strain ATCC 15692 / DSM 22644 / CIP 104116 / JCM 14847 / LMG 12228 / 1C / PRS 101 / PAO1).